We begin with the raw amino-acid sequence, 569 residues long: Urease subunit alpha (569 aa).

The Urease domain maps to 131-569 (GGIDTHIHFI…LPLAQRYLLL (439 aa)). Residues histidine 136, histidine 138, and lysine 219 each coordinate Ni(2+). Lysine 219 is modified (N6-carboxylysine). Histidine 221 is a substrate binding site. 2 residues coordinate Ni(2+): histidine 248 and histidine 274. Histidine 322 (proton donor) is an active-site residue. Aspartate 362 is a binding site for Ni(2+).

Belongs to the metallo-dependent hydrolases superfamily. Urease alpha subunit family. Heterotrimer of UreA (gamma), UreB (beta) and UreC (alpha) subunits. Three heterotrimers associate to form the active enzyme. It depends on Ni cation as a cofactor. Carboxylation allows a single lysine to coordinate two nickel ions.

Its subcellular location is the cytoplasm. It catalyses the reaction urea + 2 H2O + H(+) = hydrogencarbonate + 2 NH4(+). It functions in the pathway nitrogen metabolism; urea degradation; CO(2) and NH(3) from urea (urease route): step 1/1. The chain is Urease subunit alpha from Synechococcus sp. (strain CC9605).